Here is a 344-residue protein sequence, read N- to C-terminus: Ketol-acid reductoisomerase (NADP(+)) (344 aa).

In terms of domain architecture, KARI N-terminal Rossmann spans 2–181 (EKIYYDADIS…GAGRAGILTT (180 aa)). NADP(+) contacts are provided by residues 25 to 28 (YGSQ), Arg-48, Ser-52, and 82 to 85 (DERQ). His-107 is an active-site residue. Residue Gly-133 coordinates NADP(+). Positions 182 to 327 (TFREETETDL…RKLRSMMPFI (146 aa)) constitute a KARI C-terminal knotted domain. 4 residues coordinate Mg(2+): Asp-190, Glu-194, Glu-226, and Glu-230. Position 251 (Ser-251) interacts with substrate.

The protein belongs to the ketol-acid reductoisomerase family. Requires Mg(2+) as cofactor.

It catalyses the reaction (2R)-2,3-dihydroxy-3-methylbutanoate + NADP(+) = (2S)-2-acetolactate + NADPH + H(+). The catalysed reaction is (2R,3R)-2,3-dihydroxy-3-methylpentanoate + NADP(+) = (S)-2-ethyl-2-hydroxy-3-oxobutanoate + NADPH + H(+). Its pathway is amino-acid biosynthesis; L-isoleucine biosynthesis; L-isoleucine from 2-oxobutanoate: step 2/4. It functions in the pathway amino-acid biosynthesis; L-valine biosynthesis; L-valine from pyruvate: step 2/4. Functionally, involved in the biosynthesis of branched-chain amino acids (BCAA). Catalyzes an alkyl-migration followed by a ketol-acid reduction of (S)-2-acetolactate (S2AL) to yield (R)-2,3-dihydroxy-isovalerate. In the isomerase reaction, S2AL is rearranged via a Mg-dependent methyl migration to produce 3-hydroxy-3-methyl-2-ketobutyrate (HMKB). In the reductase reaction, this 2-ketoacid undergoes a metal-dependent reduction by NADPH to yield (R)-2,3-dihydroxy-isovalerate. This chain is Ketol-acid reductoisomerase (NADP(+)), found in Alicyclobacillus acidocaldarius subsp. acidocaldarius (strain ATCC 27009 / DSM 446 / BCRC 14685 / JCM 5260 / KCTC 1825 / NBRC 15652 / NCIMB 11725 / NRRL B-14509 / 104-IA) (Bacillus acidocaldarius).